A 274-amino-acid polypeptide reads, in one-letter code: MKKTAIALLAWFVSSASLAATPWQKITHPVPGAAQSIGSFANGCIIGADTLPVQSDNYQVMRTDQRRYFGHPDLVMFIQRLSHQAQQRGLGTVLIGDMGMPAGGRFNGGHASHQTGLDVDIFLQLPKTRWSQAQLLRPQALDLVSRDGKHVVPSRWSSDIASLIKLAAQDNDVTRIFVNPAIKQQLCLDAGSDRDWLRKVRPWFQHRAHMHVRLRCPADSLECEDQPLPPPGDGCGAELQSWFEPPKPGTTKPEKKTPPPLPPSCQALLDEHVL.

Positions 1-19 (MKKTAIALLAWFVSSASLA) are cleaved as a signal peptide. Intrachain disulfides connect cysteine 44–cysteine 265, cysteine 187–cysteine 235, and cysteine 216–cysteine 223. 6 residues coordinate Zn(2+): histidine 110, histidine 113, aspartate 120, aspartate 147, histidine 150, and histidine 211. The disordered stretch occupies residues 225 to 274 (DQPLPPPGDGCGAELQSWFEPPKPGTTKPEKKTPPPLPPSCQALLDEHVL).

The protein belongs to the peptidase M74 family. In terms of assembly, dimer. It depends on Zn(2+) as a cofactor.

The protein localises to the periplasm. In terms of biological role, murein endopeptidase that cleaves the D-alanyl-meso-2,6-diamino-pimelyl amide bond that connects peptidoglycan strands. Likely plays a role in the removal of murein from the sacculus. This is Penicillin-insensitive murein endopeptidase from Salmonella paratyphi A (strain AKU_12601).